Reading from the N-terminus, the 504-residue chain is Histidine ammonia-lyase (504 aa).

Positions 141–143 (ASG) form a cross-link, 5-imidazolinone (Ala-Gly). Position 142 is a 2,3-didehydroalanine (Ser) (Ser142).

It belongs to the PAL/histidase family. Post-translationally, contains an active site 4-methylidene-imidazol-5-one (MIO), which is formed autocatalytically by cyclization and dehydration of residues Ala-Ser-Gly.

It is found in the cytoplasm. It catalyses the reaction L-histidine = trans-urocanate + NH4(+). The protein operates within amino-acid degradation; L-histidine degradation into L-glutamate; N-formimidoyl-L-glutamate from L-histidine: step 1/3. The polypeptide is Histidine ammonia-lyase (Geobacillus thermodenitrificans (strain NG80-2)).